A 390-amino-acid polypeptide reads, in one-letter code: NADH-quinone oxidoreductase subunit D (390 aa).

It belongs to the complex I 49 kDa subunit family. NDH-1 is composed of 14 different subunits. Subunits NuoB, C, D, E, F, and G constitute the peripheral sector of the complex.

The protein localises to the cell membrane. The catalysed reaction is a quinone + NADH + 5 H(+)(in) = a quinol + NAD(+) + 4 H(+)(out). Its function is as follows. NDH-1 shuttles electrons from NADH, via FMN and iron-sulfur (Fe-S) centers, to quinones in the respiratory chain. The immediate electron acceptor for the enzyme in this species is believed to be ubiquinone. Couples the redox reaction to proton translocation (for every two electrons transferred, four hydrogen ions are translocated across the cytoplasmic membrane), and thus conserves the redox energy in a proton gradient. This chain is NADH-quinone oxidoreductase subunit D, found in Wolbachia sp. subsp. Brugia malayi (strain TRS).